Consider the following 98-residue polypeptide: Co-chaperonin GroES 1 (98 aa).

It belongs to the GroES chaperonin family. As to quaternary structure, heptamer of 7 subunits arranged in a ring. Interacts with the chaperonin GroEL.

It is found in the cytoplasm. Together with the chaperonin GroEL, plays an essential role in assisting protein folding. The GroEL-GroES system forms a nano-cage that allows encapsulation of the non-native substrate proteins and provides a physical environment optimized to promote and accelerate protein folding. GroES binds to the apical surface of the GroEL ring, thereby capping the opening of the GroEL channel. The chain is Co-chaperonin GroES 1 from Rhodopseudomonas palustris (strain ATCC BAA-98 / CGA009).